The following is a 313-amino-acid chain: Protoheme IX farnesyltransferase (313 aa).

The next 8 membrane-spanning stretches (helical) occupy residues 34 to 54 (VIEL…RGTV), 56 to 76 (PLLI…ANTL), 105 to 125 (HALI…WWTT), 128 to 148 (LSAH…TLVL), 152 to 172 (TSQN…IGWS), 173 to 193 (AVTG…FFWT), 243 to 263 (LALA…TWFL), and 291 to 311 (YLAV…PTLF).

This sequence belongs to the UbiA prenyltransferase family. Protoheme IX farnesyltransferase subfamily.

It localises to the cell membrane. It catalyses the reaction heme b + (2E,6E)-farnesyl diphosphate + H2O = Fe(II)-heme o + diphosphate. It functions in the pathway porphyrin-containing compound metabolism; heme O biosynthesis; heme O from protoheme: step 1/1. Functionally, converts heme B (protoheme IX) to heme O by substitution of the vinyl group on carbon 2 of heme B porphyrin ring with a hydroxyethyl farnesyl side group. The protein is Protoheme IX farnesyltransferase of Mycolicibacterium vanbaalenii (strain DSM 7251 / JCM 13017 / BCRC 16820 / KCTC 9966 / NRRL B-24157 / PYR-1) (Mycobacterium vanbaalenii).